The chain runs to 289 residues: ATP synthase subunit a (289 aa).

6 helical membrane passes run 43–63 (AFHVDTLGWSVALGLIFVLIF), 101–121 (SAVIAPLALTIFVWVFLMNAV), 160–180 (LSVFALIIFYSIKVKGIGGFI), 193–213 (IFVQALLIPVNFLLEFVTLIA), 232–252 (VFILIAVMFGSGLLWLSGLGI), and 259–279 (AVFHILIITLQAFIFMMLTIV).

The protein belongs to the ATPase A chain family. F-type ATPases have 2 components, CF(1) - the catalytic core - and CF(0) - the membrane proton channel. CF(1) has five subunits: alpha(3), beta(3), gamma(1), delta(1), epsilon(1). CF(0) has three main subunits: a(1), b(2) and c(9-12). The alpha and beta chains form an alternating ring which encloses part of the gamma chain. CF(1) is attached to CF(0) by a central stalk formed by the gamma and epsilon chains, while a peripheral stalk is formed by the delta and b chains.

The protein localises to the cell inner membrane. Functionally, key component of the proton channel; it plays a direct role in the translocation of protons across the membrane. This Pseudomonas syringae pv. tomato (strain ATCC BAA-871 / DC3000) protein is ATP synthase subunit a.